Consider the following 301-residue polypeptide: Acetyl-coenzyme A carboxylase carboxyl transferase subunit beta (301 aa).

The CoA carboxyltransferase N-terminal domain maps to 25–294; the sequence is LWIKDPSTGE…NSDAPAPQKP (270 aa).

Belongs to the AccD/PCCB family. Acetyl-CoA carboxylase is a heterohexamer composed of biotin carboxyl carrier protein (AccB), biotin carboxylase (AccC) and two subunits each of ACCase subunit alpha (AccA) and ACCase subunit beta (AccD).

It is found in the cytoplasm. The catalysed reaction is N(6)-carboxybiotinyl-L-lysyl-[protein] + acetyl-CoA = N(6)-biotinyl-L-lysyl-[protein] + malonyl-CoA. Its pathway is lipid metabolism; malonyl-CoA biosynthesis; malonyl-CoA from acetyl-CoA: step 1/1. Functionally, component of the acetyl coenzyme A carboxylase (ACC) complex. Biotin carboxylase (BC) catalyzes the carboxylation of biotin on its carrier protein (BCCP) and then the CO(2) group is transferred by the transcarboxylase to acetyl-CoA to form malonyl-CoA. This chain is Acetyl-coenzyme A carboxylase carboxyl transferase subunit beta, found in Brucella abortus (strain 2308).